Reading from the N-terminus, the 198-residue chain is Acyl carrier protein phosphodiesterase (198 aa).

It belongs to the AcpH family.

The enzyme catalyses holo-[ACP] + H2O = apo-[ACP] + (R)-4'-phosphopantetheine + H(+). Converts holo-ACP to apo-ACP by hydrolytic cleavage of the phosphopantetheine prosthetic group from ACP. The chain is Acyl carrier protein phosphodiesterase from Photorhabdus laumondii subsp. laumondii (strain DSM 15139 / CIP 105565 / TT01) (Photorhabdus luminescens subsp. laumondii).